We begin with the raw amino-acid sequence, 266 residues long: PTS system sorbose-specific EIIC component (266 aa).

One can recognise a PTS EIIC type-4 domain in the interval 1–237 (MEISTLQIIA…GGVGVIIALI (237 aa)). 7 helical membrane passes run 3-23 (ISTL…MGSV), 33-53 (LIAC…VMLG), 79-99 (IISA…IAIA), 100-120 (LPVA…TVVF), 151-171 (VAIP…SSML), 183-203 (QIAG…MMGV), and 219-239 (YLDF…LIYI).

The protein resides in the cell inner membrane. Functionally, the phosphoenolpyruvate-dependent sugar phosphotransferase system (PTS), a major carbohydrate active transport system, catalyzes the phosphorylation of incoming sugar substrates concomitant with their translocation across the cell membrane. The enzyme II SorABFM PTS system is involved in L-sorbose transport. The sequence is that of PTS system sorbose-specific EIIC component from Klebsiella pneumoniae.